A 462-amino-acid chain; its full sequence is Bifunctional enzyme LpxC/FabZ (462 aa).

Residues 1-302 (MQKQQTLKDK…MARLIRKEIK (302 aa)) form a UDP-3-O-acyl-N-acetylglucosamine deacetylase region. Residues H78, H260, and D264 each contribute to the Zn(2+) site. H287 (proton donor) is an active-site residue. The interval 303–462 (QNEAQAPVYN…FMAQIIQNKE (160 aa)) is 3-hydroxyacyl-[acyl-carrier-protein] dehydratase. H364 is an active-site residue.

This sequence in the N-terminal section; belongs to the LpxC family. The protein in the C-terminal section; belongs to the thioester dehydratase family. It depends on Zn(2+) as a cofactor.

It is found in the cytoplasm. The enzyme catalyses a UDP-3-O-[(3R)-3-hydroxyacyl]-N-acetyl-alpha-D-glucosamine + H2O = a UDP-3-O-[(3R)-3-hydroxyacyl]-alpha-D-glucosamine + acetate. The catalysed reaction is a (3R)-hydroxyacyl-[ACP] = a (2E)-enoyl-[ACP] + H2O. It functions in the pathway glycolipid biosynthesis; lipid IV(A) biosynthesis; lipid IV(A) from (3R)-3-hydroxytetradecanoyl-[acyl-carrier-protein] and UDP-N-acetyl-alpha-D-glucosamine: step 2/6. Functionally, catalyzes the hydrolysis of UDP-3-O-myristoyl-N-acetylglucosamine to form UDP-3-O-myristoylglucosamine and acetate, the committed step in lipid A biosynthesis. Involved in unsaturated fatty acids biosynthesis. Catalyzes the dehydration of short chain beta-hydroxyacyl-ACPs and long chain saturated and unsaturated beta-hydroxyacyl-ACPs. The polypeptide is Bifunctional enzyme LpxC/FabZ (lpxC/fabZ) (Porphyromonas gingivalis (strain ATCC BAA-308 / W83)).